Consider the following 349-residue polypeptide: Ion-translocating oxidoreductase complex subunit D (349 aa).

Transmembrane regions (helical) follow at residues 20-42 (VMQRVILCLLPGLVVQCAFFGWG), 77-99 (SAMLTAILIGVAIPPLAPWWMIV), and 124-144 (AMAAYVLLLVSFPVQMTTWIA). Residue Thr-185 is modified to FMN phosphoryl threonine. 5 helical membrane-spanning segments follow: residues 212–232 (STGVGWFWVNLAYLAGGLVLL), 239–259 (WHISTGVLLGLFVASSIGFLL), 265–285 (ASPLMHLFSGATMLAAFFIAT), 291–311 (ATSPRGRIIFGALIGVLVYII), and 315–335 (GGYPDAFAFAVLLANLCAPFI).

Belongs to the NqrB/RnfD family. In terms of assembly, the complex is composed of six subunits: RnfA, RnfB, RnfC, RnfD, RnfE and RnfG. The cofactor is FMN.

The protein localises to the cell inner membrane. Its function is as follows. Part of a membrane-bound complex that couples electron transfer with translocation of ions across the membrane. This chain is Ion-translocating oxidoreductase complex subunit D, found in Shewanella baltica (strain OS195).